Consider the following 220-residue polypeptide: Glycerol-3-phosphate acyltransferase (220 aa).

The next 6 membrane-spanning stretches (helical) occupy residues I11–L31, L70–F90, L96–F116, G127–V147, I153–P173, and M193–A213.

The protein belongs to the PlsY family. As to quaternary structure, probably interacts with PlsX.

It is found in the cell inner membrane. The catalysed reaction is an acyl phosphate + sn-glycerol 3-phosphate = a 1-acyl-sn-glycero-3-phosphate + phosphate. The protein operates within lipid metabolism; phospholipid metabolism. Catalyzes the transfer of an acyl group from acyl-phosphate (acyl-PO(4)) to glycerol-3-phosphate (G3P) to form lysophosphatidic acid (LPA). This enzyme utilizes acyl-phosphate as fatty acyl donor, but not acyl-CoA or acyl-ACP. The protein is Glycerol-3-phosphate acyltransferase of Helicobacter pylori (strain ATCC 700392 / 26695) (Campylobacter pylori).